Here is a 547-residue protein sequence, read N- to C-terminus: Cytochrome P450 monooxygenase cpsD (547 aa).

The chain crosses the membrane as a helical span at residues 18–38; sequence LTGAALVVTLITSVIIVAADL. Position 476 (cysteine 476) interacts with heme. Residues 528–547 form a disordered region; it reads RRRDARRTHEALGSKLKPEE. Residues 534–547 show a composition bias toward basic and acidic residues; sequence RTHEALGSKLKPEE.

It belongs to the cytochrome P450 family. Requires heme as cofactor.

It is found in the membrane. The catalysed reaction is campesine B + campesine C + reduced [NADPH--hemoprotein reductase] + O2 = campesine D + oxidized [NADPH--hemoprotein reductase] + 2 H2O + 2 H(+). It carries out the reaction 2 campesine B + reduced [NADPH--hemoprotein reductase] + O2 = campesine F + oxidized [NADPH--hemoprotein reductase] + 2 H2O + H(+). The enzyme catalyses campesine C + campesine A + reduced [NADPH--hemoprotein reductase] + O2 = campesine E + oxidized [NADPH--hemoprotein reductase] + 2 H2O + 2 H(+). Its pathway is alkaloid biosynthesis. Its function is as follows. Cytochrome P450 monooxygenase; part of the gene cluster that mediates the biosynthesis of campesine G, a dimeric indole piperazine alkaloid that shows good insecticidal activity Galleria mellonella. Within the pathway, cpsD acts as a dimerase that simultaneously catalyzes one C-C bond (C3-C3') and two C-N bonds (C2-N16' and C2'-N16) coupling reactions between campesines B and C to produce a heterodimer with unexpected 6/5/6/6/6/6/5/6 eight-ring scaffold called campesine D. CpsD is also able to catalyze oxidative heterocoupling od campesines A with B to produce campesine F and campesines A with C to produce campesine E. The non-canonical non-ribosomal peptide synthetase cpsA catalyzes the first steps of the pathway by producing L-tryptophanal and L-valinal from their respective amino-acids. These products condensate spontaneously to form trypyl-valyl pyrazine also known as didehydrocampesine A. The NmrA-like family domain-containing oxidoreductase cpsB is the next enzyme in cps pathway and reduces the unstable didehydrocampesine A to campesine A. The methyltransferase cpsF and the acetyltransferase cpsE both recognize N13 of piperazine ring to carry out methylation and acetylation of campesine A to produce campesine C and B, respectively. The cytochrome P450 monooxygenase cpsD then acts as a dimerase that catalyzes oxidative heterocoupling between campesine B and C to produce heterodimers with unexpected 6/5/6/6/6/6/5/6 eight-ring scaffold called campesine D. Finally,the cytochrome P450 monooxygenase cpsC is a regioselective dehydrogenase that catalyzes dehydrogenation reaction towards C2-N1 to produce campesine G. The protein is Cytochrome P450 monooxygenase cpsD of Aspergillus campestris (strain IBT 28561).